The sequence spans 657 residues: Pentatricopeptide repeat-containing protein At2g37310 (657 aa).

15 PPR repeats span residues 21 to 55 (DGGA…SIKP), 56 to 86 (DNFL…ITVR), 87 to 121 (NAFS…SCYS), 128 to 165 (DSIS…GFDS), 166 to 196 (DVFV…MSER), 197 to 232 (DVVS…DFKP), 233 to 267 (NGVT…HIQM), 268 to 298 (DLSL…MSEK), 299 to 333 (DSVT…GLST), 334 to 364 (WNAM…GSRP), 365 to 399 (NTVT…GADN), 400 to 430 (NIYV…CKDR), 431 to 465 (SLIA…GTKP), 466 to 501 (DDVT…DIEP), and 502 to 536 (GVEH…PIAK). The type E motif stretch occupies residues 537 to 612 (VWGALLNGAS…IPGTSWIETE (76 aa)). The tract at residues 613–643 (KGLRSFIAKDSSCERSKEMYEIIEGLVESMS) is type E(+) motif.

The protein belongs to the PPR family. PCMP-E subfamily.

The sequence is that of Pentatricopeptide repeat-containing protein At2g37310 (PCMP-E49) from Arabidopsis thaliana (Mouse-ear cress).